The sequence spans 121 residues: Large ribosomal subunit protein eL18 (121 aa).

It belongs to the eukaryotic ribosomal protein eL18 family.

This chain is Large ribosomal subunit protein eL18, found in Methanosphaerula palustris (strain ATCC BAA-1556 / DSM 19958 / E1-9c).